Here is a 440-residue protein sequence, read N- to C-terminus: Phosphoglycerate kinase, glycosomal (440 aa).

12 residues coordinate (2R)-3-phosphoglycerate: Val-23, Asp-24, Phe-25, Asn-26, Arg-39, Ser-61, His-62, Gly-64, Arg-65, Arg-135, His-171, and Arg-172. Position 217 (Gly-217) interacts with CDP. Residue Ala-218 coordinates ADP. 2 residues coordinate AMP: Ala-218 and Lys-219. Ala-218 is a binding site for ATP. Ala-218 is a binding site for Mg(2+). Lys-219 contributes to the (2R)-3-phosphoglycerate binding site. Asp-222 provides a ligand contact to CDP. Asp-222 provides a ligand contact to Mg(2+). Lys-223 and Gly-241 together coordinate ADP. Lys-223 serves as a coordination point for AMP. Gly-241 contributes to the CDP binding site. The AMP site is built by Ala-242 and Ala-314. 2 residues coordinate ATP: Ala-242 and Ala-314. The ADP site is built by Ala-314 and Asn-338. CDP contacts are provided by Gly-339 and Phe-344. ADP is bound by residues Phe-344, Glu-345, Asp-377, and Ser-378. Glu-345 is a binding site for AMP. 2 residues coordinate ATP: Asp-377 and Ser-378. Residue Asp-377 coordinates Mg(2+).

This sequence belongs to the phosphoglycerate kinase family. In terms of assembly, monomer. Mg(2+) serves as cofactor.

It is found in the glycosome. It carries out the reaction (2R)-3-phosphoglycerate + ATP = (2R)-3-phospho-glyceroyl phosphate + ADP. It participates in carbohydrate degradation; glycolysis; pyruvate from D-glyceraldehyde 3-phosphate: step 2/5. The chain is Phosphoglycerate kinase, glycosomal from Trypanosoma brucei brucei.